We begin with the raw amino-acid sequence, 414 residues long: Ferredoxin--NAD(P)(+) reductase fdr (414 aa).

7–38 (DVVIVGAGHGGAQTAIALRQNGFAGTIAIIGA) is an FAD binding site. 149 to 177 (KVVIIGGGYIGLEAAAVMAKFGKNVTLIE) is a binding site for NAD(+).

This sequence belongs to the FAD-dependent oxidoreductase family. Monomer. Carbazole 1,9a-dioxygenase complex consists of a terminal oxygenase component CarAa, a ferredoxin reductase component fdr and a ferredoxin component CarAc. FAD serves as cofactor.

The catalysed reaction is 2 reduced [2Fe-2S]-[ferredoxin] + NAD(+) + H(+) = 2 oxidized [2Fe-2S]-[ferredoxin] + NADH. It catalyses the reaction 2 reduced [2Fe-2S]-[ferredoxin] + NADP(+) + H(+) = 2 oxidized [2Fe-2S]-[ferredoxin] + NADPH. In terms of biological role, part of the multicomponent carbazole 1,9a-dioxygenase (CARDO), that converts carbazole (CAR) into 2-aminobiphenyl-2,3-diol. This chain is Ferredoxin--NAD(P)(+) reductase fdr (fdr), found in Sphingomonas sp.